Reading from the N-terminus, the 742-residue chain is Photosystem I P700 chlorophyll a apoprotein A2 (742 aa).

Helical transmembrane passes span 46–69, 135–158, 175–199, 273–291, 336–359, 375–401, 423–445, and 525–543; these read LFST…FHIA, LFQA…LHLQ, LNHH…HVAI, IAHH…GHMY, LHFQ…QHMG, SALY…IFFV, ALIS…IYVH, and FLVH…LILI. [4Fe-4S] cluster contacts are provided by cysteine 567 and cysteine 576. A run of 2 helical transmembrane segments spans residues 583-604 and 651-673; these read AMYL…YWHW and LSVW…MFLI. The divinyl chlorophyll a site is built by histidine 662, methionine 670, and tyrosine 678. Tryptophan 679 is a phylloquinone binding site. The helical transmembrane segment at 715–735 threads the bilayer; it reads LVGLAHFTIGNILTFGAFVIA.

The protein belongs to the PsaA/PsaB family. In terms of assembly, the PsaA/B heterodimer binds the P700 divinyl chlorophyll special pair and subsequent electron acceptors. PSI consists of a core antenna complex that captures photons, and an electron transfer chain that converts photonic excitation into a charge separation. The cyanobacterial PSI reaction center is composed of one copy each of PsaA,B,C,D,E,F,I,J,K,L,M and X, and forms trimeric complexes. It depends on PSI electron transfer chain: 5 divinyl chlorophyll a, 1 divinyl chlorophyll a', 2 phylloquinones and 3 4Fe-4S clusters. PSI core antenna: 90 divinyl chlorophyll a, 22 carotenoids, 3 phospholipids and 1 galactolipid. P700 is a divinyl chlorophyll a/divinyl chlorophyll a' dimer, A0 is one or more divinyl chlorophyll a, A1 is one or both phylloquinones and FX is a shared 4Fe-4S iron-sulfur center. as a cofactor.

The protein resides in the cellular thylakoid membrane. The catalysed reaction is reduced [plastocyanin] + hnu + oxidized [2Fe-2S]-[ferredoxin] = oxidized [plastocyanin] + reduced [2Fe-2S]-[ferredoxin]. In terms of biological role, psaA and PsaB bind P700, the primary electron donor of photosystem I (PSI), as well as the electron acceptors A0, A1 and FX. PSI is a plastocyanin/cytochrome c6-ferredoxin oxidoreductase, converting photonic excitation into a charge separation, which transfers an electron from the donor P700 chlorophyll pair to the spectroscopically characterized acceptors A0, A1, FX, FA and FB in turn. Oxidized P700 is reduced on the lumenal side of the thylakoid membrane by plastocyanin or cytochrome c6. This is Photosystem I P700 chlorophyll a apoprotein A2 from Prochlorococcus marinus (strain MIT 9515).